Reading from the N-terminus, the 207-residue chain is Large ribosomal subunit protein bL9 (207 aa).

The segment covering 162–176 (QKKEEKAKDEVSATE) has biased composition (basic and acidic residues). The segment at 162 to 207 (QKKEEKAKDEVSATEKDEELMLSSVTNDNDGDGAKEIVVEGTEESQ) is disordered.

The protein belongs to the bacterial ribosomal protein bL9 family.

In terms of biological role, binds to the 23S rRNA. In Ehrlichia ruminantium (strain Gardel), this protein is Large ribosomal subunit protein bL9.